Reading from the N-terminus, the 124-residue chain is Glycine cleavage system H protein (124 aa).

A Lipoyl-binding domain is found at 22-104; it reads LVITGITDHA…YGKGWIYKIK (83 aa). Lys63 carries the post-translational modification N6-lipoyllysine.

This sequence belongs to the GcvH family. As to quaternary structure, the glycine cleavage system is composed of four proteins: P, T, L and H. Requires (R)-lipoate as cofactor.

In terms of biological role, the glycine cleavage system catalyzes the degradation of glycine. The H protein shuttles the methylamine group of glycine from the P protein to the T protein. In Acinetobacter baumannii (strain SDF), this protein is Glycine cleavage system H protein.